We begin with the raw amino-acid sequence, 97 residues long: MSKNVSAIKKNQVSLRNKRKNKSYKSAIKTLIKKYINSLDELMDLNNTYVCTLKLSAVYKKIDQAVRKGVLHKNQGSRKKSMLAKAMKISISRIKTI.

Residues M1–L15 are compositionally biased toward polar residues. The tract at residues M1–K20 is disordered.

The protein belongs to the bacterial ribosomal protein bS20 family.

It is found in the plastid. The protein resides in the chloroplast. In terms of biological role, binds directly to 16S ribosomal RNA. This chain is Small ribosomal subunit protein bS20c, found in Gracilaria tenuistipitata var. liui (Red alga).